Here is a 210-residue protein sequence, read N- to C-terminus: Na(+)-translocating NADH-quinone reductase subunit D (210 aa).

5 helical membrane passes run 42–62 (FVMT…ISLI), 72–92 (IIAQ…VLKA), 103–123 (VFVG…AYAM), 131–151 (FLDG…VATV), and 178–198 (NGLL…IWGV).

Belongs to the NqrDE/RnfAE family. In terms of assembly, composed of six subunits; NqrA, NqrB, NqrC, NqrD, NqrE and NqrF.

It localises to the cell inner membrane. The enzyme catalyses a ubiquinone + n Na(+)(in) + NADH + H(+) = a ubiquinol + n Na(+)(out) + NAD(+). Functionally, NQR complex catalyzes the reduction of ubiquinone-1 to ubiquinol by two successive reactions, coupled with the transport of Na(+) ions from the cytoplasm to the periplasm. NqrA to NqrE are probably involved in the second step, the conversion of ubisemiquinone to ubiquinol. This Aeromonas salmonicida (strain A449) protein is Na(+)-translocating NADH-quinone reductase subunit D.